We begin with the raw amino-acid sequence, 204 residues long: Inositol diphosphatase DSP5 (204 aa).

Residues 19–168 (NFSMVEDEIY…FDVLRLKQCL (150 aa)) enclose the Tyrosine-protein phosphatase domain. The tract at residues 75 to 87 (FGIEGKTDPPTPM) is WPD loop important for active site topology. Catalysis depends on cysteine 111, which acts as the Phosphocysteine intermediate.

The protein belongs to the protein-tyrosine phosphatase family. Atypical dual-specificity phosphatase Siw14-like subfamily. In terms of tissue distribution, highly expressed in flowers. Expressed at low levels in roots, leaves, stems and siliques.

The enzyme catalyses 5-diphospho-1D-myo-inositol 1,2,3,4,6-pentakisphosphate + H2O = 1D-myo-inositol hexakisphosphate + phosphate + H(+). It catalyses the reaction 1,5-bis(diphospho)-1D-myo-inositol 2,3,4,6-tetrakisphosphate + H2O = 1-diphospho-1D-myo-inositol 2,3,4,5,6-pentakisphosphate + phosphate + 2 H(+). The catalysed reaction is 3,5-bis(diphospho)-1D-myo-inositol 1,2,4,6-tetrakisphosphate + H2O = 3-diphospho-1D-myo-inositol 1,2,4,5,6-pentakisphosphate + phosphate + 2 H(+). It carries out the reaction 6-diphospho-1D-myo-inositol pentakisphosphate + H2O = 1D-myo-inositol hexakisphosphate + phosphate + H(+). In terms of biological role, cleaves the beta-phosphate at the 5-position of soluble inositol pyrophosphates. Has highest activity on 5-diphosphoinositol 1,2,3,4,6-pentakisphosphate (5-InsP(7)). Possesses low phosphotyrosine phosphatase activity in vitro. Dephosphorylates the phosphoinositides PI(3,5)P2. Hydrolyzes O-methylfluorescein phosphate in vitro. This chain is Inositol diphosphatase DSP5, found in Arabidopsis thaliana (Mouse-ear cress).